A 500-amino-acid polypeptide reads, in one-letter code: Raftlin-2 (500 aa).

Gly-2 carries the N-myristoyl glycine lipid modification. Cys-3 carries the S-palmitoyl cysteine lipid modification. A disordered region spans residues Gly-203–Arg-236. Over residues Glu-213–Glu-224 the composition is skewed to basic and acidic residues. Ser-404 is modified (phosphoserine). Residues Ala-406 to Met-500 form a disordered region. A Phosphothreonine modification is found at Thr-408. Basic and acidic residues predominate over residues Pro-409 to Lys-424. Positions Ser-426–Gln-438 are enriched in polar residues. A Phosphoserine modification is found at Ser-429. Residues Ser-467 to Ser-478 show a composition bias toward low complexity.

This sequence belongs to the raftlin family. In terms of tissue distribution, expressed in B-cells, heart, brain, spleen, large intestine and lung. Expressed in dendritic cells and macrophages.

It is found in the cell membrane. Functionally, upon bacterial lipopolysaccharide stimulation, mediates clathrin-dependent internalization of TLR4 in dendritic cells, resulting in activation of TICAM1-mediated signaling and subsequent IFNB1 production. May regulate B-cell antigen receptor-mediated signaling. This chain is Raftlin-2 (Rftn2), found in Mus musculus (Mouse).